Here is a 526-residue protein sequence, read N- to C-terminus: Anthranilate synthase component 1 (526 aa).

Residues serine 40 and 304–306 (PYM) each bind L-tryptophan. Chorismate is bound at residue 341 to 342 (GT). Residue glutamate 374 participates in Mg(2+) binding. Chorismate contacts are provided by residues tyrosine 461, arginine 481, 495–497 (GAG), and glycine 497. Position 510 (glutamate 510) interacts with Mg(2+).

This sequence belongs to the anthranilate synthase component I family. As to quaternary structure, heterotetramer consisting of two non-identical subunits: a beta subunit (TrpG) and a large alpha subunit (TrpE). The cofactor is Mg(2+).

It carries out the reaction chorismate + L-glutamine = anthranilate + pyruvate + L-glutamate + H(+). It functions in the pathway amino-acid biosynthesis; L-tryptophan biosynthesis; L-tryptophan from chorismate: step 1/5. With respect to regulation, feedback inhibited by tryptophan. Functionally, part of a heterotetrameric complex that catalyzes the two-step biosynthesis of anthranilate, an intermediate in the biosynthesis of L-tryptophan. In the first step, the glutamine-binding beta subunit (TrpG) of anthranilate synthase (AS) provides the glutamine amidotransferase activity which generates ammonia as a substrate that, along with chorismate, is used in the second step, catalyzed by the large alpha subunit of AS (TrpE) to produce anthranilate. In the absence of TrpG, TrpE can synthesize anthranilate directly from chorismate and high concentrations of ammonia. The protein is Anthranilate synthase component 1 (trpE) of Buchnera aphidicola subsp. Tetraneura caerulescens.